Reading from the N-terminus, the 285-residue chain is Phosphatidylserine decarboxylase proenzyme (285 aa).

Catalysis depends on charge relay system; for autoendoproteolytic cleavage activity residues D89, H146, and S252. The active-site Schiff-base intermediate with substrate; via pyruvic acid; for decarboxylase activity is S252. A Pyruvic acid (Ser); by autocatalysis modification is found at S252.

Belongs to the phosphatidylserine decarboxylase family. PSD-B subfamily. Prokaryotic type I sub-subfamily. As to quaternary structure, heterodimer of a large membrane-associated beta subunit and a small pyruvoyl-containing alpha subunit. Pyruvate serves as cofactor. Is synthesized initially as an inactive proenzyme. Formation of the active enzyme involves a self-maturation process in which the active site pyruvoyl group is generated from an internal serine residue via an autocatalytic post-translational modification. Two non-identical subunits are generated from the proenzyme in this reaction, and the pyruvate is formed at the N-terminus of the alpha chain, which is derived from the carboxyl end of the proenzyme. The autoendoproteolytic cleavage occurs by a canonical serine protease mechanism, in which the side chain hydroxyl group of the serine supplies its oxygen atom to form the C-terminus of the beta chain, while the remainder of the serine residue undergoes an oxidative deamination to produce ammonia and the pyruvoyl prosthetic group on the alpha chain. During this reaction, the Ser that is part of the protease active site of the proenzyme becomes the pyruvoyl prosthetic group, which constitutes an essential element of the active site of the mature decarboxylase.

It is found in the cell membrane. It carries out the reaction a 1,2-diacyl-sn-glycero-3-phospho-L-serine + H(+) = a 1,2-diacyl-sn-glycero-3-phosphoethanolamine + CO2. It participates in phospholipid metabolism; phosphatidylethanolamine biosynthesis; phosphatidylethanolamine from CDP-diacylglycerol: step 2/2. Its function is as follows. Catalyzes the formation of phosphatidylethanolamine (PtdEtn) from phosphatidylserine (PtdSer). This Vibrio parahaemolyticus serotype O3:K6 (strain RIMD 2210633) protein is Phosphatidylserine decarboxylase proenzyme.